The chain runs to 208 residues: MSAIAQNPWLMVLAIFIINVCYVTFLTMRTILTLKGYRYVAAVVSFMEVLVYVVGLGLVMSSLDQIQNIFAYALGFSVGIIVGMKIEEKLALGYTVVNVTSSEYELDLPNELRNLGYGVTHYEAFGRDGSRMVMQILTPRKYELKLMDTVKNLDPKAFIIAYEPRNIHGGFWVKGVRKRKLKAYEPEQLEVVVDHEEIVGGSSNEQKV.

The next 3 helical transmembrane spans lie at Pro-8–Met-28, Val-40–Met-60, and Ile-66–Ile-86.

It belongs to the UPF0316 family.

The protein localises to the cell membrane. The chain is UPF0316 protein SERP1448 from Staphylococcus epidermidis (strain ATCC 35984 / DSM 28319 / BCRC 17069 / CCUG 31568 / BM 3577 / RP62A).